Here is a 365-residue protein sequence, read N- to C-terminus: Phosphatidylcholine:ceramide cholinephosphotransferase 2 (365 aa).

Residues 9-50 (LEGHLESQTNNSTNTYTSPTEAVEEEDKNGKGKPKTLSNGLR) form a disordered region. Low complexity predominate over residues 15 to 28 (SQTNNSTNTYTSPT). A run of 5 helical transmembrane segments spans residues 80 to 100 (GIAFVYALFNLILTTVMITVV), 128 to 148 (FSVSEINGMVLVGLWLTQWLF), 159 to 179 (FFFIMGTLYLYRCITMYVTTL), 219 to 239 (ILCGDFLFSGHTVVLTLTYLF), and 248 to 268 (FWWYHLVCWLLSAAGIICILV). Residue H229 is part of the active site. Residues H272 and D276 contribute to the active site. The chain crosses the membrane as a helical span at residues 273 to 290 (YTVDVIIAYYITTRLFWW). Residues 291 to 365 (YHSMANEKNL…KIGEDNEKST (75 aa)) are Cytoplasmic-facing. S-palmitoyl cysteine attachment occurs at residues C331, C332, C343, and C348.

It belongs to the sphingomyelin synthase family. Post-translationally, palmitoylated on Cys-331, Cys-332, Cys-343 and Cys-348; which plays an important role in plasma membrane localization. In terms of tissue distribution, expression restricted to late round spermatids and elongating spermatids but not detected in late elongate spermatids and Sertoli cells (at protein level).

It localises to the cell membrane. The protein resides in the golgi apparatus membrane. The catalysed reaction is an N-acylsphing-4-enine + a 1,2-diacyl-sn-glycero-3-phosphocholine = a sphingomyelin + a 1,2-diacyl-sn-glycerol. The enzyme catalyses an N-acylsphinganine + a 1,2-diacyl-sn-glycero-3-phosphocholine = an N-acylsphinganine-1-phosphocholine + a 1,2-diacyl-sn-glycerol. It catalyses the reaction an N-acyl-(4R)-4-hydroxysphinganine + a 1,2-diacyl-sn-glycero-3-phosphocholine = an N-acyl-(4R)-4-hydroxysphinganine-phosphocholine + a 1,2-diacyl-sn-glycerol. It carries out the reaction an N-acylsphing-4-enine + a 1,2-diacyl-sn-glycero-3-phosphoethanolamine = an N-acylsphing-4-enine 1-phosphoethanolamine + a 1,2-diacyl-sn-glycerol. The catalysed reaction is an N-acylsphinganine + a 1,2-diacyl-sn-glycero-3-phosphoethanolamine = an N-acylsphinganine-1-phosphoethanolamine + a 1,2-diacyl-sn-glycerol. The enzyme catalyses an N-acyl-(4R)-4-hydroxysphinganine + a 1,2-diacyl-sn-glycero-3-phosphoethanolamine = an N-acyl-(4R)-4-hydroxysphinganine-1-phosphoethanolamine + a 1,2-diacyl-sn-glycerol. It catalyses the reaction 1,2-dihexadecanoyl-sn-glycero-3-phosphocholine + an N-acylsphing-4-enine = 1,2-dihexadecanoyl-sn-glycerol + a sphingomyelin. It carries out the reaction 1-(9Z-octadecenoyl)-2-acyl-sn-3-glycerol + a sphingomyelin = a 1-(9Z-octadecenoyl)-2-acyl-sn-glycero-3-phosphocholine + an N-acylsphing-4-enine. The catalysed reaction is N-hexadecanoylsphinganine + a 1,2-diacyl-sn-glycero-3-phosphocholine = N-hexadecanoyl-sphinganine-1-phosphocholine + a 1,2-diacyl-sn-glycerol. The enzyme catalyses N-hexadecanoyl-(4R)-hydroxysphinganine + a 1,2-diacyl-sn-glycero-3-phosphocholine = N-hexadecanoyl-(4R)-hydroxysphinganine-phosphocholine + a 1,2-diacyl-sn-glycerol. It catalyses the reaction N-hexadecanoylsphinganine + a 1,2-diacyl-sn-glycero-3-phosphoethanolamine = N-hexadecanoyl-sphinganine-1-phosphoethanolamine + a 1,2-diacyl-sn-glycerol. It carries out the reaction N-hexadecanoyl-(4R)-hydroxysphinganine + a 1,2-diacyl-sn-glycero-3-phosphoethanolamine = N-hexadecanoyl-(4R)-hydroxysphinganine-1-phosphoethanolamine + a 1,2-diacyl-sn-glycerol. Its pathway is sphingolipid metabolism. In terms of biological role, sphingomyelin synthase that primarily contributes to sphingomyelin synthesis and homeostasis at the plasma membrane. Catalyzes the reversible transfer of phosphocholine moiety in sphingomyelin biosynthesis: in the forward reaction transfers phosphocholine head group of phosphatidylcholine (PC) on to ceramide (CER) to form ceramide phosphocholine (sphingomyelin, SM) and diacylglycerol (DAG) as by-product, and in the reverse reaction transfers phosphocholine from SM to DAG to form PC and CER. The direction of the reaction appears to depend on the levels of CER and DAG in the plasma membrane. Does not use free phosphorylcholine or CDP-choline as donors. Can also transfer phosphoethanolamine head group of phosphatidylethanolamine (PE) on to ceramide (CER) to form ceramide phosphoethanolamine (CPE). Regulates receptor-mediated signal transduction via mitogenic DAG and proapoptotic CER, as well as via SM, a structural component of membrane rafts that serve as platforms for signal transduction and protein sorting. To a lesser extent, plays a role in secretory transport via regulation of DAG pool at the Golgi apparatus and its downstream effects on PRKD1. Required for normal bone matrix mineralization. This chain is Phosphatidylcholine:ceramide cholinephosphotransferase 2 (Sgms2), found in Rattus norvegicus (Rat).